Here is a 304-residue protein sequence, read N- to C-terminus: Caspase-6 (304 aa).

A disordered region spans residues 1–29 (MSGAERRPAAGRVQLDSKPTPTTTADGNQ). The propeptide occupies 1–35 (MSGAERRPAAGRVQLDSKPTPTTTADGNQNITEVD). The segment covering 17-29 (SKPTPTTTADGNQ) has biased composition (polar residues). Positions 54 to 56 (QRR) are tri-arginine exosite. Histidine 133 is an active-site residue. A 130's region region spans residues 137–154 (DHVYAYDAQIKIETITNM). The active site involves cysteine 175. A propeptide spanning residues 192–204 (SKDETTVNQTEVD) is cleaved from the precursor.

The protein belongs to the peptidase C14A family. As to quaternary structure, heterotetramer that consists of two anti-parallel arranged heterodimers, each one formed by a 18 kDa (p18) and a 11 kDa (p11) subunit. Heterotetramer that consists of two anti-parallel arranged heterodimers, each one formed by a 18 kDa (Caspase-6 subunit p18) and a 11 kDa (Caspase-6 subunit p11) subunit. As to expression, widely expressed.

It is found in the cytoplasm. Its subcellular location is the nucleus. The catalysed reaction is Strict requirement for Asp at position P1 and has a preferred cleavage sequence of Val-Glu-His-Asp-|-.. Its activity is regulated as follows. During activation, the N-terminal prodomain is removed by cleavage. Concomitantly, double cleavage gives rise to a large 18-kDa and a small 11-kDa subunit. The two large and two small subunits then assemble to form the active CASP6 complex. Intramolecular cleavage at Asp-191 is a prerequisite for CASP6 self-activation. Its function is as follows. Cysteine protease that plays essential roles in programmed cell death, development and innate immunity. Acts as a non-canonical executioner caspase during apoptosis: localizes in the nucleus and cleaves the nuclear structural protein lamin-A/LMNA thereby inducing nuclear shrinkage and fragmentation. Lamin-A/LMNA cleavage is required for chromatin condensation and nuclear disassembly during apoptotic execution. Plays an essential role in defense against viruses by acting as a central mediator of the ZBP1-mediated pyroptosis, apoptosis, and necroptosis (PANoptosis), independently of its cysteine protease activity. PANoptosis is a unique inflammatory programmed cell death, which provides a molecular scaffold that allows the interactions and activation of machinery required for inflammasome/pyroptosis, apoptosis and necroptosis. This Gallus gallus (Chicken) protein is Caspase-6.